The primary structure comprises 699 residues: Putative inactive kinesin-like protein KIN-7B (699 aa).

Residues 1 to 170 enclose the Kinesin motor domain; sequence MRAIQKKSLC…LLFGSCAKEV (170 aa). The stretch at 179-247 forms a coiled coil; it reads VMSDKALVKH…QSRLQDLLQS (69 aa). The segment at 249 to 345 is disordered; it reads GDHDLNRQVQ…VNSRHSRPSG (97 aa). The segment covering 264 to 275 has biased composition (low complexity); the sequence is RSPPSVGMPPSV. Basic and acidic residues predominate over residues 276–298; that stretch reads SRDDSSQVSHDDSDLYKEVRCIE. Residues 313-338 show a composition bias toward polar residues; it reads GESSSPQDSNMNSGLHGNDSNASVNS.

Belongs to the TRAFAC class myosin-kinesin ATPase superfamily. Kinesin family. KIN-7 subfamily.

This is Putative inactive kinesin-like protein KIN-7B from Oryza sativa subsp. japonica (Rice).